We begin with the raw amino-acid sequence, 305 residues long: Ribose import binding protein RbsB (305 aa).

Positions 1–18 are cleaved as a signal peptide; that stretch reads MKKAVSVILTLSLFLLTA. C19 carries the N-palmitoyl cysteine lipid modification. The S-diacylglycerol cysteine moiety is linked to residue C19.

Belongs to the bacterial solute-binding protein 2 family. The complex is composed of an ATP-binding protein (RbsA), two transmembrane proteins (RbsC) and a solute-binding protein (RbsB). Interacts with FloT.

The protein localises to the cell membrane. It localises to the membrane raft. Its function is as follows. Part of the ABC transporter complex RbsABC involved in ribose import. Binds ribose. The sequence is that of Ribose import binding protein RbsB (rbsB) from Bacillus subtilis (strain 168).